The following is a 648-amino-acid chain: Macrolide export ATP-binding/permease protein MacB (648 aa).

Positions Leu-5–Thr-243 constitute an ABC transporter domain. Gly-41–Ser-48 contacts ATP. 5 consecutive transmembrane segments (helical) span residues Leu-273 to Gly-293, Ala-417 to Ala-437, Leu-523 to Ile-543, Val-577 to Met-597, and Leu-611 to Leu-631.

It belongs to the ABC transporter superfamily. Macrolide exporter (TC 3.A.1.122) family. As to quaternary structure, homodimer. Part of the tripartite efflux system MacAB-TolC, which is composed of an inner membrane transporter, MacB, a periplasmic membrane fusion protein, MacA, and an outer membrane component, TolC. The complex forms a large protein conduit and can translocate molecules across both the inner and outer membranes. Interacts with MacA.

The protein localises to the cell inner membrane. Its function is as follows. Part of the tripartite efflux system MacAB-TolC. MacB is a non-canonical ABC transporter that contains transmembrane domains (TMD), which form a pore in the inner membrane, and an ATP-binding domain (NBD), which is responsible for energy generation. Confers resistance against macrolides. The protein is Macrolide export ATP-binding/permease protein MacB of Salmonella typhi.